We begin with the raw amino-acid sequence, 276 residues long: MKNTIHINFAIFLIIANIIYSSASASTDISTVASPLFEGTEGCFLLYDASTNAEIAQFNKAKCATQMAPDSTFKIALSLMAFDAEIIDQKTIFKWDKTPKGMEIWNSNHTPKTWMQFSVVWVSQEITQKIGLNKIKNYLKDFDYGNQDFSGDKERNNGLTEAWLESSLKISPEEQIQFLRKIINHNLPVKNSAIENTIENMYLQDLDNSTKLYGKTGAGFTANRTLQNGWFEGFIISKSGHKYVFVSALTGNLGSNLTSSIKAKKNAITILNTLNL.

Residues 1 to 25 (MKNTIHINFAIFLIIANIIYSSASA) form the signal peptide. Residue S71 is the Acyl-ester intermediate of the active site. Positions 71, 74, 118, 216, and 218 each coordinate a beta-lactam. K74 is modified (N6-carboxylysine).

The protein belongs to the class-D beta-lactamase family. Monomer.

It localises to the periplasm. The enzyme catalyses a beta-lactam + H2O = a substituted beta-amino acid. Inhibited by penicillin sulfones. Only weakly inhibited by clavulanic acid and sulbactam. Class D beta-lactamase which confers resistance to the beta-lactam antibiotics, including amoxicillin and ticarcillin. Acts via hydrolysis of the beta-lactam ring. Has penicillin- and cephalosporin-hydrolyzing activities. This chain is Beta-lactamase OXA-1, found in Escherichia coli.